Here is a 529-residue protein sequence, read N- to C-terminus: Polygalacturonase (529 aa).

The first 21 residues, 1-21 (MNHRYTLLALAAAALSAGAHA), serve as a signal peptide directing secretion. The active-site Proton donor is the Asp305. His331 is an active-site residue. Residues 516–529 (AFVPLKSVAPTSPI) are required for PGA export across the outer membrane and catalytic activity.

It belongs to the glycosyl hydrolase 28 family. As to quaternary structure, monomer.

The protein resides in the secreted. It catalyses the reaction (1,4-alpha-D-galacturonosyl)n+m + H2O = (1,4-alpha-D-galacturonosyl)n + (1,4-alpha-D-galacturonosyl)m.. Functionally, contributes to the wilt disease production on tomato. The polypeptide is Polygalacturonase (pglA) (Ralstonia solanacearum (Pseudomonas solanacearum)).